The chain runs to 103 residues: MAGGKGGKGMGKVGAKRHSRKSNKASIEGITKPAIRRLARRGGVKRISSFIYDDSRQVLKSFLENVVRDAVTYTEHARRKTVTAMDVVYALKRQGRTLYGFGG.

The segment covering 1–12 (MAGGKGGKGMGK) has biased composition (gly residues). The segment at 1 to 29 (MAGGKGGKGMGKVGAKRHSRKSNKASIEG) is disordered. Residues K5, K8, K12, and K16 each carry the N6-acetyllysine modification. The segment covering 14–23 (GAKRHSRKSN) has biased composition (basic residues). A DNA-binding region spans residues 16–21 (KRHSRK).

This sequence belongs to the histone H4 family. As to quaternary structure, the nucleosome is a histone octamer containing two molecules each of H2A, H2B, H3 and H4 assembled in one H3-H4 heterotetramer and two H2A-H2B heterodimers. The octamer wraps approximately 147 bp of DNA.

It localises to the nucleus. The protein localises to the chromosome. Core component of nucleosome. Nucleosomes wrap and compact DNA into chromatin, limiting DNA accessibility to the cellular machineries which require DNA as a template. Histones thereby play a central role in transcription regulation, DNA repair, DNA replication and chromosomal stability. DNA accessibility is regulated via a complex set of post-translational modifications of histones, also called histone code, and nucleosome remodeling. The sequence is that of Histone H4, minor from Tetrahymena pyriformis.